A 329-amino-acid polypeptide reads, in one-letter code: Oxidoreductase sirO (329 aa).

Residue Asp-54 participates in NADP(+) binding. Tyr-59 (proton donor) is an active-site residue. Residue His-118 coordinates substrate. Residues 148-149 (SN), Gln-174, 203-213 (SPLCCGLLINA), and 288-296 (SSARQLEES) each bind NADP(+).

It belongs to the aldo/keto reductase family. Aldo/keto reductase 2 subfamily.

It functions in the pathway mycotoxin biosynthesis. In terms of biological role, oxidoreductase; part of the gene cluster that mediates the biosynthesis of sirodesmin PL, an epipolythiodioxopiperazine (ETP) characterized by a disulfide bridged cyclic dipeptide and that acts as a phytotoxin which is involved in the blackleg didease of canola. SirD catalyzes the O-prenylation of L-tyrosine (L-Tyr) in the presence of dimethylallyl diphosphate (DMAPP) to yield 4-O-dimethylallyl-L-Tyr, and therefore represents probably the first pathway-specific enzyme in the biosynthesis of sirodesmin PL. 4-O-dimethylallyl-L-Tyr, then undergoes condensation with L-Ser in a reaction catalyzed by the non-ribosomal peptide synthase sirP to form the diketopiperazine (DKP) backbone. Further bishydroxylation of the DKP performed by the cytochrome P450 monooxygenase sirC leads to the production of the intermediate phomamide. This step is essential to form the reactive thiol group required for toxicity of sirodesmin PL. The next steps of sirodesmin biosynthesis are not well understood yet, but some predictions could be made from intermediate compounds identification. Phomamide is converted into phomalizarine via oxidation, probably by sirT. Further oxidation, methylation (by sirM or sirN) and reduction steps convert phomalizarine to deacetyl sirodesmin. Finally, acetyltransferase sirH probably acetylates deacetyl sirodesmin to produce sirodesmin PL. The sequence is that of Oxidoreductase sirO from Leptosphaeria maculans (Blackleg fungus).